Consider the following 129-residue polypeptide: Ubiquinol-cytochrome-c reductase complex assembly factor 2 (129 aa).

The transit peptide at 1–13 (MSATRYRRFLKLC) directs the protein to the mitochondrion.

It is found in the mitochondrion matrix. It localises to the mitochondrion nucleoid. The protein localises to the mitochondrion. Required for the assembly of the ubiquinol-cytochrome c reductase complex (mitochondrial respiratory chain complex III or cytochrome b-c1 complex). May play a role in the modulation of respiratory chain activities such as oxygen consumption and ATP production. May be involved in cytochrome b translation and/or stability. The protein is Ubiquinol-cytochrome-c reductase complex assembly factor 2 (uqcc2) of Danio rerio (Zebrafish).